The following is a 236-amino-acid chain: Glucosamine-6-phosphate deaminase (236 aa).

Asp67 (proton acceptor; for enolization step) is an active-site residue. Asn136 (for ring-opening step) is an active-site residue. Catalysis depends on His138, which acts as the Proton acceptor; for ring-opening step. Catalysis depends on Glu143, which acts as the For ring-opening step.

This sequence belongs to the glucosamine/galactosamine-6-phosphate isomerase family. NagB subfamily.

The catalysed reaction is alpha-D-glucosamine 6-phosphate + H2O = beta-D-fructose 6-phosphate + NH4(+). Its pathway is amino-sugar metabolism; N-acetylneuraminate degradation; D-fructose 6-phosphate from N-acetylneuraminate: step 5/5. Its function is as follows. Catalyzes the reversible isomerization-deamination of glucosamine 6-phosphate (GlcN6P) to form fructose 6-phosphate (Fru6P) and ammonium ion. This Lachnoclostridium phytofermentans (strain ATCC 700394 / DSM 18823 / ISDg) (Clostridium phytofermentans) protein is Glucosamine-6-phosphate deaminase.